We begin with the raw amino-acid sequence, 275 residues long: Putative ABC transporter permease protein ORF2 (275 aa).

Transmembrane regions (helical) follow at residues 11 to 31, 74 to 94, 108 to 128, 136 to 156, 185 to 205, and 239 to 259; these read YFIF…FMLF, IAVS…AFAF, LIIA…YVLT, TVFA…IFIL, ILLP…GTYL, and IPAI…AYIF. In terms of domain architecture, ABC transmembrane type-1 spans 69–260; that stretch reads LKNSVIAVSI…LPMLIAYIFG (192 aa).

This sequence belongs to the binding-protein-dependent transport system permease family. MalFG subfamily.

The protein resides in the cell membrane. The protein is Putative ABC transporter permease protein ORF2 of Caldicellulosiruptor sp. (strain Rt8B.4).